Reading from the N-terminus, the 89-residue chain is Class I hydrophobin D (89 aa).

An N-terminal signal peptide occupies residues 1–16 (MKFSLATIALAAAVVA). Disulfide bonds link Cys-28-Cys-68, Cys-39-Cys-60, Cys-40-Cys-52, and Cys-69-Cys-85. Asn-36 carries an N-linked (GlcNAc...) asparagine glycan.

This sequence belongs to the fungal hydrophobin family.

The protein localises to the secreted. It is found in the cell wall. It localises to the vacuole. The protein resides in the cytoplasmic vesicle. In terms of biological role, aerial growth, conidiation, and dispersal of filamentous fungi in the environment rely upon a capability of their secreting small amphipathic proteins called hydrophobins (HPBs) with low sequence identity. Class I can self-assemble into an outermost layer of rodlet bundles on aerial cell surfaces, conferring cellular hydrophobicity that supports fungal growth, development and dispersal; whereas Class II form highly ordered films at water-air interfaces through intermolecular interactions but contribute nothing to the rodlet structure. Hyd1D contributes to certain cell wall-related features, such as hydrophobicity but is not involved in cell wall-related events during fungal proliferation in host hemocoel. Does not contribute to conidial hydrophobicity. Involved in insect hemocoel colonization independent of cell hydrophobicity. This Beauveria bassiana (strain ARSEF 2860) (White muscardine disease fungus) protein is Class I hydrophobin D.